A 267-amino-acid chain; its full sequence is Matrilysin (267 aa).

A signal peptide spans M1 to A17. Positions L18–E94 are cleaved as a propeptide — activation peptide. The short motif at P85 to V92 is the Cysteine switch element. C87 is a Zn(2+) binding site. D153 contributes to the Ca(2+) binding site. Zn(2+) is bound by residues H163 and D165. Residues D170, G171, G173, and T175 each contribute to the Ca(2+) site. H178 contacts Zn(2+). 3 residues coordinate Ca(2+): G185, G187, and D189. H191 serves as a coordination point for Zn(2+). 2 residues coordinate Ca(2+): D193 and E196. Residue H214 participates in Zn(2+) binding. Residue E215 is part of the active site. 2 residues coordinate Zn(2+): H218 and H224.

This sequence belongs to the peptidase M10A family. It depends on Ca(2+) as a cofactor. Zn(2+) is required as a cofactor.

It localises to the secreted. It is found in the extracellular space. The protein localises to the extracellular matrix. It catalyses the reaction Cleavage of 14-Ala-|-Leu-15 and 16-Tyr-|-Leu-17 in B chain of insulin. No action on collagen types I, II, IV, V. Cleaves gelatin chain alpha2(I) &gt; alpha1(I).. In terms of biological role, degrades casein, gelatins of types I, III, IV, and V, and fibronectin. Activates procollagenase. This chain is Matrilysin (MMP7), found in Homo sapiens (Human).